A 437-amino-acid chain; its full sequence is GTPase Obg (437 aa).

The 159-residue stretch at 2–160 (SLFLDTARIE…KILLLELRVL (159 aa)) folds into the Obg domain. Positions 161-338 (ADVGLVGFPS…LLARTSELLA (178 aa)) constitute an OBG-type G domain. GTP is bound by residues 167–174 (GFPSVGKS), 192–196 (FTTIT), 214–217 (DMPG), 284–287 (NKMD), and 319–321 (SGL). Residues Ser-174 and Thr-194 each contribute to the Mg(2+) site. Residues 359–437 (GFEDEEKPFK…IQKFEFEFVD (79 aa)) enclose the OCT domain.

The protein belongs to the TRAFAC class OBG-HflX-like GTPase superfamily. OBG GTPase family. As to quaternary structure, monomer. Mg(2+) serves as cofactor.

It is found in the cytoplasm. In terms of biological role, an essential GTPase which binds GTP, GDP and possibly (p)ppGpp with moderate affinity, with high nucleotide exchange rates and a fairly low GTP hydrolysis rate. Plays a role in control of the cell cycle, stress response, ribosome biogenesis and in those bacteria that undergo differentiation, in morphogenesis control. This is GTPase Obg from Lactococcus lactis subsp. cremoris (strain SK11).